The following is a 428-amino-acid chain: Histone deacetylase 3 (428 aa).

The tract at residues 3–316 is histone deacetylase; that stretch reads KTVAYFYDPD…WTYETSLLVE (314 aa). Residues H17, G21, and K25 each contribute to the 1D-myo-inositol 1,4,5,6-tetrakisphosphate site. The active site involves H135. Zn(2+) is bound by residues D170, H172, and D259. 1D-myo-inositol 1,4,5,6-tetrakisphosphate is bound at residue R265. Composition is skewed to basic and acidic residues over residues 388–405 and 415–428; these read DRTDEADAEERGPEENYS and DGDHDNDKESDVEI. Residues 388–428 are disordered; it reads DRTDEADAEERGPEENYSRPEAPNEFYDGDHDNDKESDVEI. Position 424 is a phosphoserine (S424).

The protein belongs to the histone deacetylase family. HD type 1 subfamily. In terms of assembly, interacts with HDAC7 and HDAC9. Interacts with HDAC10, DAXX and DACH1. Found in a complex with NCOR1 and NCOR2. Component of the N-Cor repressor complex, at least composed of NCOR1, NCOR2, HDAC3, TBL1X, TBL1R, CORO2A and GPS2. Interacts with BCOR, MJD2A/JHDM3A, NRIP1, PRDM6 and SRY. Interacts with BTBD14B. Interacts with GLIS2. Interacts (via the DNA-binding domain) with NR2C1; the interaction recruits phosphorylated NR2C1 to PML bodies for sumoylation. Component of the Notch corepressor complex. Interacts with CBFA2T3 and NKAP. Interacts with APEX1; the interaction is not dependent on the acetylated status of APEX1. Interacts with and deacetylates MAPK14. Interacts with ZMYND15. Interacts with SMRT/NCOR2 and BCL6 on DNA enhancer elements. Interacts with INSM1. Interacts with XBP1; the interaction occurs in endothelial cell (EC) under disturbed flow. Interacts (via C-terminus) with CCAR2 (via N-terminus). Interacts with and deacetylates MEF2D. Interacts with BEND3. Interacts with NKAPL. Interacts with DHX36; this interaction occurs in a RNA-dependent manner. Interacts weakly with CRY1; this interaction is enhanced in the presence of FBXL3. Interacts with FBXL3 and BMAL1. Interacts with NCOR1. Interacts with RARA. Interacts with SETD5. Post-translationally, deubiquitinated on 'Lys-63'-linked ubiquitin chains by USP38; leading to a decreased level of histone acetylation. Sumoylated in vitro.

It localises to the nucleus. It is found in the chromosome. Its subcellular location is the cytoplasm. The protein resides in the cytosol. It catalyses the reaction N(6)-acetyl-L-lysyl-[histone] + H2O = L-lysyl-[histone] + acetate. It carries out the reaction N(6)-acetyl-L-lysyl-[protein] + H2O = L-lysyl-[protein] + acetate. The enzyme catalyses N(6)-(2E)-butenoyl-L-lysyl-[protein] + H2O = (2E)-2-butenoate + L-lysyl-[protein]. The catalysed reaction is N(6)-(2-hydroxyisobutanoyl)-L-lysyl-[protein] + H2O = 2-hydroxy-2-methylpropanoate + L-lysyl-[protein]. It catalyses the reaction N(6)-[(S)-lactoyl]-L-lysyl-[protein] + H2O = (S)-lactate + L-lysyl-[protein]. Its activity is regulated as follows. Inositol tetraphosphate (1D-myo-inositol 1,4,5,6-tetrakisphosphate) promotes the histone deacetylase activity by acting as an intermolecular glue between HDAC3 and NCOR2, thereby promoting its association with the N-Cor complex, a prerequisite for the histone deacetylase activity. Histone deacetylase that catalyzes the deacetylation of lysine residues on the N-terminal part of the core histones (H2A, H2B, H3 and H4), and some other non-histone substrates. Histone deacetylation gives a tag for epigenetic repression and plays an important role in transcriptional regulation, cell cycle progression and developmental events. Histone deacetylases act via the formation of large multiprotein complexes, such as N-Cor repressor complex, which activate the histone deacetylase activity. Participates in the BCL6 transcriptional repressor activity by deacetylating the H3 'Lys-27' (H3K27) on enhancer elements, antagonizing EP300 acetyltransferase activity and repressing proximal gene expression. Acts as a molecular chaperone for shuttling phosphorylated NR2C1 to PML bodies for sumoylation. Contributes, together with XBP1 isoform 1, to the activation of NFE2L2-mediated HMOX1 transcription factor gene expression in a PI(3)K/mTORC2/Akt-dependent signaling pathway leading to endothelial cell (EC) survival under disturbed flow/oxidative stress. Regulates both the transcriptional activation and repression phases of the circadian clock in a deacetylase activity-independent manner. During the activation phase, promotes the accumulation of ubiquitinated BMAL1 at the E-boxes and during the repression phase, blocks FBXL3-mediated CRY1/2 ubiquitination and promotes the interaction of CRY1 and BMAL1. The NCOR1-HDAC3 complex regulates the circadian expression of the core clock gene BMAL1 and the genes involved in lipid metabolism in the liver. Also functions as a deacetylase for non-histone targets, such as KAT5, MEF2D, MAPK14, RARA and STAT3. Serves as a corepressor of RARA, mediating its deacetylation and repression, leading to inhibition of RARE DNA element binding. In association with RARA, plays a role in the repression of microRNA-10a and thereby in the inflammatory response. In addition to protein deacetylase activity, also acts as a protein-lysine deacylase by recognizing other acyl groups: catalyzes removal of (2E)-butenoyl (crotonyl), lactoyl (lactyl) and 2-hydroxyisobutanoyl (2-hydroxyisobutyryl) acyl groups from lysine residues, leading to protein decrotonylation, delactylation and de-2-hydroxyisobutyrylation, respectively. Catalyzes decrotonylation of MAPRE1/EB1. Mediates delactylation NBN/NBS1, thereby inhibiting DNA double-strand breaks (DSBs) via homologous recombination (HR). This chain is Histone deacetylase 3 (HDAC3), found in Pongo abelii (Sumatran orangutan).